Consider the following 426-residue polypeptide: 10-deoxymethynolide desosaminyltransferase (426 aa).

It belongs to the glycosyltransferase 28 family. As to quaternary structure, forms a complex with DesVIII.

The enzyme catalyses 10-deoxymethynolide + dTDP-alpha-D-desosamine = 10-deoxymethymycin + dTDP + H(+). It participates in antibiotic biosynthesis. Its function is as follows. Involved in the biosynthesis of the macrolide antibiotics methymycin, neomethymycin, narbomycin, and pikromycin. Catalyzes the attachment of dTDP-D-desosamine onto 12- and 14-membered macrolactone rings 10-deoxymethynolide and narbonolide to produce 10-deoxymethymycin (YC-17) and narbomycin. DesVII is unique among glycosyltransferases in that it requires an additional protein component, DesVIII, for its activity. DesVII can recognize and process not only cyclic substrates of different ring size, but also a variety of linear substrates albeit with reduced, but measurable activities. Both L-sugars and D-sugars are recognized as substrates and variant substitutions at C-3 and C-4 are tolerated, but deoxygenation at C-6 is required. The sequence is that of 10-deoxymethynolide desosaminyltransferase from Streptomyces venezuelae.